The following is a 121-amino-acid chain: Protein CHLORORESPIRATORY REDUCTION 42, chloroplastic (121 aa).

Biogenesis factor component of the plastidial NDH subcomplex A.

It is found in the plastid. The protein localises to the chloroplast. The protein resides in the chloroplast stroma. Required for both formation and activity of the chloroplast NAD(P)H dehydrogenase (NDH) complex of the photosynthetic electron transport chain. Functions in assembly or stabilization of the NDH complex; probably involved, together with CRR1 and CRR6, in the incorporation of NdhJ, NdhM, NdhK and NdhI into the NDH subcomplex A assembly intermediate (NAI500) to produce the complex NAI400. This is Protein CHLORORESPIRATORY REDUCTION 42, chloroplastic from Arabidopsis thaliana (Mouse-ear cress).